Reading from the N-terminus, the 58-residue chain is Small ribosomal subunit protein bS21 (58 aa).

A compositionally biased stretch (basic and acidic residues) spans 32–42; that stretch reads IRKREHYEKPS. The segment at 32–58 is disordered; that stretch reads IRKREHYEKPSVKRKKKSEAARKRKFK. Positions 43 to 58 are enriched in basic residues; sequence VKRKKKSEAARKRKFK.

The protein belongs to the bacterial ribosomal protein bS21 family.

The polypeptide is Small ribosomal subunit protein bS21 (Lachnoclostridium phytofermentans (strain ATCC 700394 / DSM 18823 / ISDg) (Clostridium phytofermentans)).